The primary structure comprises 157 residues: S-ribosylhomocysteine lyase (157 aa).

Fe cation-binding residues include His-54, His-58, and Cys-124.

Belongs to the LuxS family. As to quaternary structure, homodimer. Requires Fe cation as cofactor.

The catalysed reaction is S-(5-deoxy-D-ribos-5-yl)-L-homocysteine = (S)-4,5-dihydroxypentane-2,3-dione + L-homocysteine. Its function is as follows. Involved in the synthesis of autoinducer 2 (AI-2) which is secreted by bacteria and is used to communicate both the cell density and the metabolic potential of the environment. The regulation of gene expression in response to changes in cell density is called quorum sensing. Catalyzes the transformation of S-ribosylhomocysteine (RHC) to homocysteine (HC) and 4,5-dihydroxy-2,3-pentadione (DPD). In Lactobacillus acidophilus (strain ATCC 700396 / NCK56 / N2 / NCFM), this protein is S-ribosylhomocysteine lyase.